Reading from the N-terminus, the 387-residue chain is EARP-interacting protein homolog (387 aa).

4 WD repeats span residues 132 to 172 (TAHG…TKSV), 182 to 222 (KGQL…QIYC), 226 to 266 (AHGQ…EPVK), and 270 to 310 (EHSH…SEPF). The tract at residues 311–339 (GHLVDDEDLSDQEDNPQEEKTKEPLQDSI) is disordered. Positions 315–326 (DDEDLSDQEDNP) are enriched in acidic residues. The stretch at 345–385 (EHEDSVYAVEWSSADPWLFASLSYDGRLVINRVPRALKYNI) is one WD 5 repeat.

Belongs to the WD repeat EIPR1 family.

The protein localises to the golgi apparatus. The protein resides in the trans-Golgi network. May act as a component of endosomal retrieval machinery that is involved in protein transport from early endosomes to either recycling endosomes or the trans-Golgi network. The sequence is that of EARP-interacting protein homolog from Xenopus laevis (African clawed frog).